We begin with the raw amino-acid sequence, 336 residues long: Glycerol-3-phosphate dehydrogenase [NAD(P)+] (336 aa).

NADPH contacts are provided by serine 14, tryptophan 15, arginine 35, arginine 36, and lysine 109. Sn-glycerol 3-phosphate contacts are provided by lysine 109 and glycine 139. Alanine 143 lines the NADPH pocket. Sn-glycerol 3-phosphate contacts are provided by lysine 194, aspartate 247, serine 257, arginine 258, and asparagine 259. The Proton acceptor role is filled by lysine 194. Arginine 258 provides a ligand contact to NADPH. NADPH is bound at residue glutamate 284.

Belongs to the NAD-dependent glycerol-3-phosphate dehydrogenase family.

It localises to the cytoplasm. The enzyme catalyses sn-glycerol 3-phosphate + NAD(+) = dihydroxyacetone phosphate + NADH + H(+). It catalyses the reaction sn-glycerol 3-phosphate + NADP(+) = dihydroxyacetone phosphate + NADPH + H(+). The protein operates within membrane lipid metabolism; glycerophospholipid metabolism. Catalyzes the reduction of the glycolytic intermediate dihydroxyacetone phosphate (DHAP) to sn-glycerol 3-phosphate (G3P), the key precursor for phospholipid synthesis. The protein is Glycerol-3-phosphate dehydrogenase [NAD(P)+] of Streptomyces griseus subsp. griseus (strain JCM 4626 / CBS 651.72 / NBRC 13350 / KCC S-0626 / ISP 5235).